We begin with the raw amino-acid sequence, 294 residues long: MTMTHAQNNHHARLIDGKQVAADVRANVAEGVKARIDSGLRPPGLAVVLVGEDPASQVYVKNKTKACEEVGFLSQKYTLEESTTEEELLKLIDTLNEDNAIDGILVQLPLPTHMDADNILERIKPDKDVDGFHPYNLGRLAQRMPVLRPCTPKGIMTLLARTGVELRGKDALVVGASNIVGRPMGLELLLAGCTVTITHRFTVNLPAKVSQADIVVVAVGRPGIVKGEWIKPGAIVIDVGINRRDDGALVGDIEFNEAAERASWITPVPGGVGPMTVATLMENTLYAANHLHKD.

Residues 175–177 (GAS) and Ile-241 contribute to the NADP(+) site.

This sequence belongs to the tetrahydrofolate dehydrogenase/cyclohydrolase family. As to quaternary structure, homodimer.

The catalysed reaction is (6R)-5,10-methylene-5,6,7,8-tetrahydrofolate + NADP(+) = (6R)-5,10-methenyltetrahydrofolate + NADPH. It carries out the reaction (6R)-5,10-methenyltetrahydrofolate + H2O = (6R)-10-formyltetrahydrofolate + H(+). Its pathway is one-carbon metabolism; tetrahydrofolate interconversion. Functionally, catalyzes the oxidation of 5,10-methylenetetrahydrofolate to 5,10-methenyltetrahydrofolate and then the hydrolysis of 5,10-methenyltetrahydrofolate to 10-formyltetrahydrofolate. The chain is Bifunctional protein FolD from Hahella chejuensis (strain KCTC 2396).